Consider the following 21-residue polypeptide: Protein YliM (21 aa).

The chain is Protein YliM from Escherichia coli (strain K12).